The sequence spans 81 residues: Small ribosomal subunit protein bS16 (81 aa).

The protein belongs to the bacterial ribosomal protein bS16 family.

The polypeptide is Small ribosomal subunit protein bS16 (Alkaliphilus oremlandii (strain OhILAs) (Clostridium oremlandii (strain OhILAs))).